Here is a 226-residue protein sequence, read N- to C-terminus: MIVHIPAVLNAEQIARCRAVMQTGDWIDGRVTAGHQSRLVKNNLQLPESSPEHQELGEMIVRALWHNPLFISAVLPHTIFPPLFNRYDVGMGFGTHVDTAVRRNLDGSLRIRTDVSATLFLAGPEDYDGGELTIEDTYGTHSVRLPAGDLIIYPADSLHFVSPVTRGSRIASFFWIQSLIRDKTQRNLLFNLDTAIMRLTEDVAGNPALVSLQGVYHNLLRQWAEI.

Residues 78–178 (TIFPPLFNRY…RIASFFWIQS (101 aa)) enclose the Fe2OG dioxygenase domain. His-96, Asp-98, and His-159 together coordinate Fe cation. Arg-169 is a binding site for 2-oxoglutarate.

The cofactor is Fe(2+). Requires L-ascorbate as cofactor.

The protein is PKHD-type hydroxylase Bind_0236 of Beijerinckia indica subsp. indica (strain ATCC 9039 / DSM 1715 / NCIMB 8712).